The primary structure comprises 530 residues: Autoinducer-2 kinase (530 aa).

Belongs to the FGGY kinase family.

Its subcellular location is the cytoplasm. The catalysed reaction is (S)-4,5-dihydroxypentane-2,3-dione + ATP = (2S)-2-hydroxy-3,4-dioxopentyl phosphate + ADP + H(+). Functionally, catalyzes the phosphorylation of autoinducer-2 (AI-2) to phospho-AI-2, which subsequently inactivates the transcriptional regulator LsrR and leads to the transcription of the lsr operon. Phosphorylates the ring-open form of (S)-4,5-dihydroxypentane-2,3-dione (DPD), which is the precursor to all AI-2 signaling molecules, at the C5 position. The polypeptide is Autoinducer-2 kinase (Yersinia pseudotuberculosis serotype O:1b (strain IP 31758)).